Here is a 319-residue protein sequence, read N- to C-terminus: HPr kinase/phosphorylase (319 aa).

Active-site residues include H137 and K158. 152–159 (GDSGVGKS) contacts ATP. S159 provides a ligand contact to Mg(2+). D176 (proton acceptor; for phosphorylation activity. Proton donor; for dephosphorylation activity) is an active-site residue. The interval 201 to 210 (MEIRGLGIIN) is important for the catalytic mechanism of both phosphorylation and dephosphorylation. Position 202 (E202) interacts with Mg(2+). The active site involves R243. An important for the catalytic mechanism of dephosphorylation region spans residues 264-269 (PVRPGR).

Belongs to the HPrK/P family. Homohexamer. Requires Mg(2+) as cofactor.

The catalysed reaction is [HPr protein]-L-serine + ATP = [HPr protein]-O-phospho-L-serine + ADP + H(+). The enzyme catalyses [HPr protein]-O-phospho-L-serine + phosphate + H(+) = [HPr protein]-L-serine + diphosphate. Catalyzes the ATP- as well as the pyrophosphate-dependent phosphorylation of a specific serine residue in HPr, a phosphocarrier protein of the phosphoenolpyruvate-dependent sugar phosphotransferase system (PTS). HprK/P also catalyzes the pyrophosphate-producing, inorganic phosphate-dependent dephosphorylation (phosphorolysis) of seryl-phosphorylated HPr (P-Ser-HPr). This is HPr kinase/phosphorylase from Treponema pallidum subsp. pallidum (strain SS14).